The following is a 164-amino-acid chain: ATP synthase subunit b 1 (164 aa).

The chain crosses the membrane as a helical span at residues 8–28 (PETWVAVAFVILMGVFAYFGV).

The protein belongs to the ATPase B chain family. In terms of assembly, F-type ATPases have 2 components, F(1) - the catalytic core - and F(0) - the membrane proton channel. F(1) has five subunits: alpha(3), beta(3), gamma(1), delta(1), epsilon(1). F(0) has three main subunits: a(1), b(2) and c(10-14). The alpha and beta chains form an alternating ring which encloses part of the gamma chain. F(1) is attached to F(0) by a central stalk formed by the gamma and epsilon chains, while a peripheral stalk is formed by the delta and b chains.

It is found in the cell inner membrane. In terms of biological role, f(1)F(0) ATP synthase produces ATP from ADP in the presence of a proton or sodium gradient. F-type ATPases consist of two structural domains, F(1) containing the extramembraneous catalytic core and F(0) containing the membrane proton channel, linked together by a central stalk and a peripheral stalk. During catalysis, ATP synthesis in the catalytic domain of F(1) is coupled via a rotary mechanism of the central stalk subunits to proton translocation. Component of the F(0) channel, it forms part of the peripheral stalk, linking F(1) to F(0). The polypeptide is ATP synthase subunit b 1 (Rhodopseudomonas palustris (strain BisB18)).